A 309-amino-acid chain; its full sequence is Sulfate adenylyltransferase subunit 2 (309 aa).

This sequence belongs to the PAPS reductase family. CysD subfamily. In terms of assembly, heterodimer composed of CysD, the smaller subunit, and CysN.

The catalysed reaction is sulfate + ATP + H(+) = adenosine 5'-phosphosulfate + diphosphate. It functions in the pathway sulfur metabolism; hydrogen sulfide biosynthesis; sulfite from sulfate: step 1/3. With CysN forms the ATP sulfurylase (ATPS) that catalyzes the adenylation of sulfate producing adenosine 5'-phosphosulfate (APS) and diphosphate, the first enzymatic step in sulfur assimilation pathway. APS synthesis involves the formation of a high-energy phosphoric-sulfuric acid anhydride bond driven by GTP hydrolysis by CysN coupled to ATP hydrolysis by CysD. This is Sulfate adenylyltransferase subunit 2 from Mycobacterium sp. (strain KMS).